A 185-amino-acid polypeptide reads, in one-letter code: Ribosome-recycling factor (185 aa).

This sequence belongs to the RRF family.

The protein localises to the cytoplasm. Its function is as follows. Responsible for the release of ribosomes from messenger RNA at the termination of protein biosynthesis. May increase the efficiency of translation by recycling ribosomes from one round of translation to another. This Streptococcus agalactiae serotype V (strain ATCC BAA-611 / 2603 V/R) protein is Ribosome-recycling factor.